We begin with the raw amino-acid sequence, 702 residues long: MARKTPIERYRNIGISAHIDAGKTTTTERILFYTGVTHKLGEVHDGAATTDWMEQEQERGITITSAAVTCFWKGMDMSYPEHRFNIIDTPGHVDFTIEVERSMRVLDGACMVYCAVGGVQPQSETVWRQANKYKVPRLAFVNKMDRTGANFFKVVDQIKTRLKGNPVPVVVPIGAEDNFKGVVDLLKMKAIIWDEASQGMKFEYADIPAEVKETAEKWRENMVEAAAEASEELMNKYLDEGTLSEEDIKAGLRARTLAVEIQPMLCGTAFKNKGVQRMLDAVIDYLPSPVDIPDVEGTDPDDEEKKLARKADDGEKFSALAFKLMTDPFVGQLTFVRVYSGVLSKGDTVFNSVKGKKERIGRIVQMMANERIEVDEIRAGDIAACVGLKDVTTGETLSDVDNPIILERMVFPEPVIAQAVEPKSKADQEKMGIALSRLASEDPSFRVRTDEESGQTIIAGMGELHLEIIVDRMKREFNVEANVGKPQVAYRETVRKTVTDVDGKFVRQSGGKGQYGHVVFTLEPQEAGKGFEFVDEIKGGVVPREYIPAVEKGVIEALTSGVLAGYPVVDVKVRLTFGSYHDVDSSEQAFKMAAIFGFKEAARKANPVILEPMMAVEVETPEDYAGTVMGDLSSRRGMVQGMDDMVGGGKAIKAEVPLSEMFGYATQLRSMTQGRATYTMEFKHYAEAPRNVSEAIVAARAK.

The 283-residue stretch at 8 to 290 folds into the tr-type G domain; the sequence is ERYRNIGISA…AVIDYLPSPV (283 aa). GTP contacts are provided by residues 17–24, 88–92, and 142–145; these read AHIDAGKT, DTPGH, and NKMD.

It belongs to the TRAFAC class translation factor GTPase superfamily. Classic translation factor GTPase family. EF-G/EF-2 subfamily.

The protein resides in the cytoplasm. Catalyzes the GTP-dependent ribosomal translocation step during translation elongation. During this step, the ribosome changes from the pre-translocational (PRE) to the post-translocational (POST) state as the newly formed A-site-bound peptidyl-tRNA and P-site-bound deacylated tRNA move to the P and E sites, respectively. Catalyzes the coordinated movement of the two tRNA molecules, the mRNA and conformational changes in the ribosome. The sequence is that of Elongation factor G from Acidovorax ebreus (strain TPSY) (Diaphorobacter sp. (strain TPSY)).